The chain runs to 178 residues: Large ribosomal subunit protein uL6 (178 aa).

The protein belongs to the universal ribosomal protein uL6 family. Part of the 50S ribosomal subunit.

Functionally, this protein binds to the 23S rRNA, and is important in its secondary structure. It is located near the subunit interface in the base of the L7/L12 stalk, and near the tRNA binding site of the peptidyltransferase center. In Streptococcus pneumoniae serotype 4 (strain ATCC BAA-334 / TIGR4), this protein is Large ribosomal subunit protein uL6.